Here is a 91-residue protein sequence, read N- to C-terminus: Small ribosomal subunit protein uS19 (91 aa).

The protein belongs to the universal ribosomal protein uS19 family.

Its function is as follows. Protein S19 forms a complex with S13 that binds strongly to the 16S ribosomal RNA. The sequence is that of Small ribosomal subunit protein uS19 from Acinetobacter baumannii (strain AB307-0294).